We begin with the raw amino-acid sequence, 416 residues long: Serine/threonine-protein phosphatase PP2A-like PPG1 (416 aa).

Residues D62, H64, D90, and N122 each contribute to the Mn(2+) site. H123 functions as the Proton donor in the catalytic mechanism. H173 and H248 together coordinate Mn(2+). The segment at 363–391 is disordered; it reads EDTLQGKSVNGINFDDELSTSDDTSGSGG.

It belongs to the PPP phosphatase family. PP-2A subfamily. Mn(2+) serves as cofactor.

It catalyses the reaction O-phospho-L-seryl-[protein] + H2O = L-seryl-[protein] + phosphate. The enzyme catalyses O-phospho-L-threonyl-[protein] + H2O = L-threonyl-[protein] + phosphate. Inhibited by okadaic acid, a specific inhibitor of serine/threonine phosphatases of types 1, 2A and 2B. Serine/threonine-protein phosphatase that plays an important role in controlling colony morphology, filament extension and agar invasion. Down-regulates expression of NRG1 and affects the expression of multiple filament-specific transcripts in response to serum and 37 degrees Celsius. Plays a crucial role in virulence in a mouse model of systemic candidiasis. This Candida albicans (strain SC5314 / ATCC MYA-2876) (Yeast) protein is Serine/threonine-protein phosphatase PP2A-like PPG1.